Consider the following 955-residue polypeptide: MTRKNTTTNPWAKFHGPNLGYVIEQYDLYVTGAGSVDPELQELFEIFGAPSFQDDVVTGDNTATHFSPQNTGNIEKILKVVQLVEQIRSFGHTLAHINPMEDAANGQSLLERAMNELSDADLKAIPAKTVWQDAPEGIHTALDVIHRLKEVYTQSLAYEFSHIQDSEERAWLHQMVESNSLRQPLSNQKRTALLKRLTAVEGFEQFLHKTFVGQKRFSIEGVDMLVPVLDEIVLEGAKNGVEDVMIGMAHRGRLSVLAHVLEKPYSHMFAEFKHAKIEGAVANSGWTGDVKYHLGREQVVSNEEVSTRVTLANNPSHLEFVNPVVEGFARAAQENRKKSGLPEQDTSKSFVILVHGDAAFPGQGIVSETLNLSRLNAYQTGGTIHVIANNAVGFTTDSYDSRSTKYSSDLAKGFDIPIVHVNADDPEACLAAANLAIQYRMLFKKDFLIDLIGYRRYGHNEMDDPAVTQPQVYKKIKNHPTVRAIYADQLQAAGVLNADEIETITQFTQEQLKSDYAQVPPADTSDATIHVKVPDVVAKGIQSIDTGVELDSLRAINEGLLSWPEGFNVYPKVKKILERRKDALEENGKIEWALAESLAFASILQEGTPIRLTGQDSQRGTFAHRHIVLHDTDTNETYSPLHRLPNINASFSVHNSPLSEAAVVGYEYGYNVFAPETLVMWEAQYGDFSNTAQALFDQYVSAGRAKWGQKSGLVLLLPHGYEGQGPEHSSARPERFLQLAAENNWTVANLTSAAQYFHILRRQASILGTEAVRPLVLMTPKSLLRHPLTLSTASQLSEGRFQPALEQENLGTKPNKVKRLVLSTGKMAIDLAAEIESGKHEYNLDEIHIVRIEQLYPFPAEKVQSIIKRFKNLEEIIWVQEEPRNMGAWHYMAPILFELAGDKVKTGYIGRPDRSSPSGGDPFAHKAEQELIVSHALDVKYNFRQDKLEIEVFSN.

This sequence belongs to the alpha-ketoglutarate dehydrogenase family. As to quaternary structure, homodimer. Part of the 2-oxoglutarate dehydrogenase (OGDH) complex composed of E1 (2-oxoglutarate dehydrogenase), E2 (dihydrolipoamide succinyltransferase) and E3 (dihydrolipoamide dehydrogenase); the complex contains multiple copies of the three enzymatic components (E1, E2 and E3). Thiamine diphosphate serves as cofactor.

The catalysed reaction is N(6)-[(R)-lipoyl]-L-lysyl-[protein] + 2-oxoglutarate + H(+) = N(6)-[(R)-S(8)-succinyldihydrolipoyl]-L-lysyl-[protein] + CO2. In terms of biological role, E1 component of the 2-oxoglutarate dehydrogenase (OGDH) complex which catalyzes the decarboxylation of 2-oxoglutarate, the first step in the conversion of 2-oxoglutarate to succinyl-CoA and CO(2). This chain is 2-oxoglutarate dehydrogenase E1 component, found in Bacillus cereus (strain 03BB102).